Reading from the N-terminus, the 491-residue chain is MSFVIASPEALLAAATDLAAIRSTIRAANAAAAVPTTGALAPAADEVSAGIAALFGAQAQSYQAVSAQAAAFHDRFVQLLNAGGGSYASAEIANAQQNLLNAVNAPTQTLLGRPLVGDGADGASGPVGQPGGDGGILWGNGGNGGDSTSPGVAGGAGGSAGLIGNGGRGGNGAPGGAGGNGGLGGLLLGNGGAGGVGGTGDNGVGDLGAGGGGGDGGLGGRAGLIGHGGAGGNGGDGGHGGSGKAGGSGGSGGFGQFGGAGGLLYGNGGAAGSGGNGGDAGTGVSSDGFAGLGGSGGRGGDAGLIGVGGGGGNGGDPGLGARLFQVGSRGGDGGVGGWLYGDGGGGGDGGNGGLPFIGSTNAGNGGSARLIGNGGAGGSGGSGAPGSVSSGGVGGAGNPGGSGGNGGVWYGNGGAGGAAGQGGPGMNTTSPGGPGGVGGHGGTAILFGDGGAGGAGAAGGPGTPDGAAGPGGSGGTGGLLFGVPGPSGPDG.

The PE domain maps to 1-92; it reads MSFVIASPEA…GGGSYASAEI (92 aa). Disordered stretches follow at residues 114–156, 376–400, and 419–491; these read PLVG…AGGA, AGGS…GNPG, and AGQG…GPDG. Residues 128 to 145 show a composition bias toward gly residues; it reads GQPGGDGGILWGNGGNGG. Over residues 432 to 480 the composition is skewed to gly residues; it reads GGPGGVGGHGGTAILFGDGGAGGAGAAGGPGTPDGAAGPGGSGGTGGLL.

It belongs to the mycobacterial PE family. PGRS subfamily.

This is an uncharacterized protein from Mycobacterium bovis (strain ATCC BAA-935 / AF2122/97).